The sequence spans 227 residues: Lysosomal-associated transmembrane protein 4B (227 aa).

4 helical membrane passes run isoleucine 26 to alanine 46, methionine 72 to glycine 92, tryptophan 100 to isoleucine 120, and cysteine 153 to isoleucine 173. A required for NEDD4 interaction region spans residues proline 205–proline 222.

This sequence belongs to the LAPTM4/LAPTM5 transporter family. In terms of assembly, homooligomer; upon reaching the lysosomes. Interacts with MCOLN1. Interacts with NEDD4; may play a role in the lysosomal sorting of LAPTM4B; enhances HGS association with NEDD4; mediates inhibition of EGFR degradation. Interacts with PIP5K1C; promotes SNX5 association with LAPTM4B; kinase activity of PIP5K1C is required; interaction is regulated by phosphatidylinositol 4,5-bisphosphate generated by PIP5K1C. Interacts with HGS; promotes HGS ubiquitination. Interacts with SNX5. Interacts with SLC3A2 and SLC7A5; recruits SLC3A2 and SLC7A5 to lysosomes to promote leucine uptake into these organelles and is required for mTORC1 activation. Interacts with LRRC32; decreases TGFB1 production in regulatory T cells. Interacts with BECN1; competes with EGFR for LAPTM4B binding; regulates EGFR activity. Interacts with EGFR; positively correlates with EGFR activation. Undergoes proteolytic cleavage following delivery to the lysosomes. Post-translationally, ubiquitinated by NEDD4.

Its subcellular location is the endomembrane system. It is found in the late endosome membrane. It localises to the cell membrane. The protein resides in the cell projection. The protein localises to the lysosome membrane. Its subcellular location is the endosome membrane. It is found in the endosome. It localises to the multivesicular body membrane. The protein resides in the multivesicular body lumen. Its function is as follows. Required for optimal lysosomal function. Blocks EGF-stimulated EGFR intraluminal sorting and degradation. Conversely by binding with the phosphatidylinositol 4,5-bisphosphate, regulates its PIP5K1C interaction, inhibits HGS ubiquitination and relieves LAPTM4B inhibition of EGFR degradation. Recruits SLC3A2 and SLC7A5 (the Leu transporter) to the lysosome, promoting entry of leucine and other essential amino acid (EAA) into the lysosome, stimulating activation of proton-transporting vacuolar (V)-ATPase protein pump (V-ATPase) and hence mTORC1 activation. Plays a role as negative regulator of TGFB1 production in regulatory T cells. Binds ceramide and facilitates its exit from late endosome in order to control cell death pathways. The chain is Lysosomal-associated transmembrane protein 4B from Rattus norvegicus (Rat).